The following is a 312-amino-acid chain: Olfactory receptor 1D2 (312 aa).

At 1–25 the chain is on the extracellular side; that stretch reads MDGGNQSEGSEFLLLGMSESPEQQR. Asparagine 5 is a glycosylation site (N-linked (GlcNAc...) asparagine). The helical transmembrane segment at 26-49 threads the bilayer; that stretch reads ILFWMFLSMYLVTVVGNVLIILAI. The Cytoplasmic portion of the chain corresponds to 50-57; the sequence is SSDSCLHT. Residues 58-79 form a helical membrane-spanning segment; it reads PMYFFLANLSFTDLFFVTNTIP. At 80–100 the chain is on the extracellular side; it reads KMLVNLQSQNKAISYAGCLTQ. An intrachain disulfide couples cysteine 97 to cysteine 189. Residues 101-120 traverse the membrane as a helical segment; it reads LYFLVSLVALDNLILAVMAY. Residues 121-139 lie on the Cytoplasmic side of the membrane; it reads DRYVAICCPLHYTTAMSPK. A helical transmembrane segment spans residues 140–158; that stretch reads LCILLLSLCWVLSVLYGLI. Topologically, residues 159 to 196 are extracellular; it reads HTLLMTRVTFCGSRKIHYIFCEMYVLLRMACSNIQTNH. Residue asparagine 195 is glycosylated (N-linked (GlcNAc...) asparagine). Residues 197–219 traverse the membrane as a helical segment; that stretch reads TVLIATGCFIFLIPFGFVIISYV. The Cytoplasmic portion of the chain corresponds to 220-236; it reads LIIRAILRIPSLSKKYK. A helical membrane pass occupies residues 237-259; it reads AFSTCASHLGAVSLFYGTLCMVY. The Extracellular portion of the chain corresponds to 260 to 271; it reads LKPLHTYSVKDS. Residues 272–291 traverse the membrane as a helical segment; the sequence is VATVMYAVVTPMMNPFIYSL. Topologically, residues 292–312 are cytoplasmic; sequence RNKDMHGALGRLLDKHFKRLT.

It belongs to the G-protein coupled receptor 1 family.

It localises to the cell membrane. Its function is as follows. Odorant receptor. The chain is Olfactory receptor 1D2 (OR1D2) from Pan troglodytes (Chimpanzee).